The following is a 119-amino-acid chain: MVKQTKAKTFQAYLDSCHRRYSCVHCRAHLANHDDLISKSFQGSQGRAYLFNSVVNVGCGPAEERLLLTGLHAVADIYCENCHTTLGWKYEQAFELSQKYKEGKFIIELSHMIKDNGWD.

A Yippee domain is found at 19–116 (RRYSCVHCRA…IELSHMIKDN (98 aa)). 4 residues coordinate Zn(2+): cysteine 23, cysteine 26, cysteine 79, and cysteine 82.

This sequence belongs to the yippee family.

Its subcellular location is the nucleus. It localises to the nucleolus. In terms of biological role, may be involved in proliferation and apoptosis in myeloid precursor cells. The protein is Protein yippee-like 3 (ypel3) of Danio rerio (Zebrafish).